The following is a 136-amino-acid chain: MTALMNHIYIDNPLISNSTNNVTHELLIDLHELYNDGEISRIVLLRTLVTQSADDATWIINLTDDVLNGLPLLKKRDRYTTQCHSTNMASTYDCDTGANAVGARGGATLAADYRGDWGGGVMLYKPLVVKACLTEI.

The protein resides in the cytoplasm. It is found in the nucleus. This is an uncharacterized protein from Schizosaccharomyces pombe (strain 972 / ATCC 24843) (Fission yeast).